Consider the following 430-residue polypeptide: tRNA(Ile)-lysidine synthase (430 aa).

An ATP-binding site is contributed by 27-32 (SGGSDS).

The protein belongs to the tRNA(Ile)-lysidine synthase family.

The protein resides in the cytoplasm. The catalysed reaction is cytidine(34) in tRNA(Ile2) + L-lysine + ATP = lysidine(34) in tRNA(Ile2) + AMP + diphosphate + H(+). Its function is as follows. Ligates lysine onto the cytidine present at position 34 of the AUA codon-specific tRNA(Ile) that contains the anticodon CAU, in an ATP-dependent manner. Cytidine is converted to lysidine, thus changing the amino acid specificity of the tRNA from methionine to isoleucine. The protein is tRNA(Ile)-lysidine synthase of Rickettsia bellii (strain OSU 85-389).